A 421-amino-acid polypeptide reads, in one-letter code: Galactooligosaccharide-binding protein (421 aa).

A signal peptide spans 1 to 22 (MKMAKKCSVFMLCAAVSLSLAA). C23 carries N-palmitoyl cysteine lipidation. The S-diacylglycerol cysteine moiety is linked to residue C23. The interval 393–421 (ATGKADPKQALDQAAETAKGQIKAKHSGK) is disordered.

Belongs to the bacterial solute-binding protein 1 family. In terms of assembly, the complex is composed of two ATP-binding proteins (MsmX), two transmembrane proteins (GanP and GanQ) and a solute-binding protein (GanS).

It is found in the cell membrane. Its function is as follows. Involved in galactan degradation. Part of the ABC transporter complex GanPQS involved in the uptake of galactooligosaccharides. Binds mainly galactotetraose and galactotriose. The protein is Galactooligosaccharide-binding protein of Bacillus subtilis (strain 168).